The sequence spans 946 residues: Probable leucine-rich repeat receptor-like protein kinase At5g49770 (946 aa).

A signal peptide spans 1–25 (MKMSSRIGLFKLLILLFFQIYSVYA). Residues 26-561 (FTDGSDFTAL…LEDSKTVSMK (536 aa)) are Extracellular-facing. LRR repeat units lie at residues 67–91 (DNRVVSISLTNRNLKGKLPTEISTL), 92–116 (SELQTLDLTGNPELSGPLPANIGNL), 118–140 (KLTFLSLMGCAFNGPIPDSIGNL), 141–164 (EQLTRLSLNLNKFSGTIPASMGRL), 166–191 (KLYWFDIADNQLEGKLPVSDGASLPG), 195–219 (LLQTGHFHFGNNKLSGEIPEKLFSS), 221–244 (MTLLHVLFDGNQFTGSIPESLGLV), 245–268 (QNLTVLRLDRNRLSGDIPSSLNNL), 269–293 (TNLQELHLSDNKFTGSLPNLTSLTS), 295–314 (YTLDVSNNPLALSPVPSWIP), 316–340 (LNSLSTLRLEDIQLDGPVPTSLFSP), 342–365 (QLQTVSLKHNLINTTLDLGTNYSK), 367–387 (LDFVDLRDNFITGYKSPANNP), and 389–407 (NVMLADNQVCQDPANQLSG). Asparagine 246, asparagine 267, and asparagine 287 each carry an N-linked (GlcNAc...) asparagine glycan. N-linked (GlcNAc...) asparagine glycans are attached at residues asparagine 354 and asparagine 362. N-linked (GlcNAc...) asparagine glycosylation is found at asparagine 415, asparagine 460, asparagine 489, and asparagine 514. Residues 562-582 (VIIGVVVGVVVLLLLLALAGI) traverse the membrane as a helical segment. Topologically, residues 583-946 (YALRQKKRAQ…YTGVFPTPKP (364 aa)) are cytoplasmic. A Protein kinase domain is found at 634 to 908 (FSDANDVGGG…EVVQELESIL (275 aa)). ATP is bound by residues 640 to 648 (VGGGGYGQV) and lysine 662. Aspartate 758 acts as the Proton acceptor in catalysis. A disordered region spans residues 919–946 (SATYEEASGDPYGRDSFEYTGVFPTPKP).

Belongs to the protein kinase superfamily. Ser/Thr protein kinase family.

The protein resides in the membrane. The enzyme catalyses L-seryl-[protein] + ATP = O-phospho-L-seryl-[protein] + ADP + H(+). It catalyses the reaction L-threonyl-[protein] + ATP = O-phospho-L-threonyl-[protein] + ADP + H(+). In Arabidopsis thaliana (Mouse-ear cress), this protein is Probable leucine-rich repeat receptor-like protein kinase At5g49770.